Consider the following 421-residue polypeptide: MYAFVRFLEDNVCYALPVSCVRDFSPRSRLDFDNQKVYAVYRGPEELGAGPESPPRAPRDWGALLLHKAQILALAEDKSDLENSVMQKKIKIPKLSLNHVEEDGEVKDYGEEDLQLRHIKRPEGRKPSEVAHKSIEAVVARLEKQNGLSLGHSTCPEEVFVEASPGTEDMDSLEDAVVPRALYEELLRNYQQQQEEMRHLQQELERTRRQLVQQAKKLKEYGALVSEMKELRDLNRRLQDVLLLRLGSGPAIDLEKVKSECLEPEPELRSTFSEEANTSSYYPAPAPVMDKYILDNGKVHLGSGIWVDEEKWHQLQVTQGDSKYTKNLAVMIWGTDVLKNRSVTGVATKKKKDAVPKPPLSPHKLSIVRECLYDRIAQETVDETEIAQRLSKVNKYICEKIMDINKSCKNEERREAKYNLQ.

K133 is modified (N6-acetyllysine). Residues 180-243 are a coiled coil; sequence RALYEELLRN…LNRRLQDVLL (64 aa). K258 participates in a covalent cross-link: Glycyl lysine isopeptide (Lys-Gly) (interchain with G-Cter in SUMO2). Residues 302-408 form the BEN domain; the sequence is GSGIWVDEEK…EKIMDINKSC (107 aa).

Acts as a transcriptional repressor. The protein is BEN domain-containing protein 5 (BEND5) of Homo sapiens (Human).